The primary structure comprises 232 residues: Ubiquinone biosynthesis O-methyltransferase (232 aa).

S-adenosyl-L-methionine is bound by residues R36, G55, D76, and L120.

This sequence belongs to the methyltransferase superfamily. UbiG/COQ3 family.

It carries out the reaction a 3-demethylubiquinol + S-adenosyl-L-methionine = a ubiquinol + S-adenosyl-L-homocysteine + H(+). The catalysed reaction is a 3-(all-trans-polyprenyl)benzene-1,2-diol + S-adenosyl-L-methionine = a 2-methoxy-6-(all-trans-polyprenyl)phenol + S-adenosyl-L-homocysteine + H(+). The protein operates within cofactor biosynthesis; ubiquinone biosynthesis. O-methyltransferase that catalyzes the 2 O-methylation steps in the ubiquinone biosynthetic pathway. The protein is Ubiquinone biosynthesis O-methyltransferase of Pseudomonas entomophila (strain L48).